Consider the following 273-residue polypeptide: MERTIGIDAGGTLTKIAYFNKKKLLTFEKFYSHEQHKIIDWIKNNNGIKQICITGGKSKLLQQLLTGSYKIIELSEFEATLAGVQFILKEEQHTINNFILTNIGTGTSIHYVYNEQYIRAGGTGVGGGTIMGLSKLLTNIDHFEDVIPLTKVGSRKELDITVGDIYGGILSPIDNNLTASNFGKAAITESNNSSSDILATVQGLVGEVVTALSLQFAETKNIEHIIYIGSTLCNNVQLQHIISSYTEYQNKTPIFLQDGGNSGAIGALLHATK.

Residue 8–15 (DAGGTLTK) participates in ATP binding. E76 (proton acceptor) is an active-site residue. ATP-binding positions include T105, 127–131 (GGTIM), F143, and S230.

The protein belongs to the type II pantothenate kinase family. As to quaternary structure, homodimer.

Its subcellular location is the cytoplasm. It catalyses the reaction (R)-pantothenate + ATP = (R)-4'-phosphopantothenate + ADP + H(+). It functions in the pathway cofactor biosynthesis; coenzyme A biosynthesis; CoA from (R)-pantothenate: step 1/5. Its function is as follows. Catalyzes the phosphorylation of pantothenate (Pan), the first step in CoA biosynthesis. This chain is Type II pantothenate kinase, found in Bacillus cereus (strain ATCC 14579 / DSM 31 / CCUG 7414 / JCM 2152 / NBRC 15305 / NCIMB 9373 / NCTC 2599 / NRRL B-3711).